The chain runs to 105 residues: Heat shock protein HspQ (105 aa).

A disordered region spans residues 74–105 (SSETQDEHPEQPSMDELARTIRKQLQAPRLRN).

The protein belongs to the HspQ family.

The protein resides in the cytoplasm. Its function is as follows. Involved in the degradation of certain denaturated proteins, including DnaA, during heat shock stress. This chain is Heat shock protein HspQ, found in Citrobacter koseri (strain ATCC BAA-895 / CDC 4225-83 / SGSC4696).